We begin with the raw amino-acid sequence, 1475 residues long: Alpha-glucan water dikinase, chloroplastic (1475 aa).

The transit peptide at 1–85 directs the protein to the chloroplast; the sequence is MSNSIGRNVL…HRPVLITPRA (85 aa). The active-site Tele-phosphohistidine intermediate is His-1077.

Belongs to the PEP-utilizing enzyme family. Homodimer. It depends on Mg(2+) as a cofactor.

The protein resides in the plastid. It localises to the chloroplast. It carries out the reaction [(1-&gt;4)-alpha-D-glucosyl](n) + n ATP + n H2O = [(1-&gt;4)-6-phospho-alpha-D-glucosyl](n) + n AMP + n phosphate + 2n H(+). Its function is as follows. Mediates the incorporation of phosphate into starch-like alpha-glucan, mostly at the C-6 position of glucose units. Acts as an overall regulator of starch mobilization. Required for starch degradation, suggesting that the phosphate content of starch regulates its degradability. The protein is Alpha-glucan water dikinase, chloroplastic (R1) of Citrus reticulata (Tangerine).